The following is a 439-amino-acid chain: MRLSRFFLPILKENPKEAEIVSHRLMLRAGMIRQEAAGIYAWLPLGFRVLKKIEQIVREEQDRSGALELLMPTLQLADLWRESGRYDAYGPEMLRIADRHKRELLYGPTNEEMITEIFRAYVKSYKNLPLNLYHIQWKFRDEQRPRFGVMRGREFLMKDAYSFDLNEAAARVAYNKMFVAYLRTFARMGLKAIPMRAETGPIGGDLSHEFIVLAETGESGVFINRDVLDLPVPGEDVDYESDLTPIIKQWTSVYAATEDVHDAARFEQEVPEAKRLNTRGIEVGQIFYFGTKYSEPMKAMVAGPDGVDVPIHGGSYGVGVSRLLGAIIEACHDDAGIKWPEAVAPFRAVVLNLKQGDAAVDAACEKLYAELQAKGVDVLYDDTDQRAGAKFAAADLIGIPWQIMIGPKGLADGKVELKRRSDGSRETMSPADAVARLVG.

This sequence belongs to the class-II aminoacyl-tRNA synthetase family. ProS type 2 subfamily. As to quaternary structure, homodimer.

The protein resides in the cytoplasm. It catalyses the reaction tRNA(Pro) + L-proline + ATP = L-prolyl-tRNA(Pro) + AMP + diphosphate. Functionally, catalyzes the attachment of proline to tRNA(Pro) in a two-step reaction: proline is first activated by ATP to form Pro-AMP and then transferred to the acceptor end of tRNA(Pro). The sequence is that of Proline--tRNA ligase from Bradyrhizobium diazoefficiens (strain JCM 10833 / BCRC 13528 / IAM 13628 / NBRC 14792 / USDA 110).